The following is a 316-amino-acid chain: tRNA dimethylallyltransferase (316 aa).

Position 17–24 (17–24) interacts with ATP; it reads GPTASGKT. Residue 19 to 24 coordinates substrate; that stretch reads TASGKT. Interaction with substrate tRNA regions lie at residues 42–45, 166–170, 247–252, and 280–287; these read DSAL, QRLSR, RCVGYR, and KRQITWLR.

This sequence belongs to the IPP transferase family. As to quaternary structure, monomer. Mg(2+) is required as a cofactor.

The catalysed reaction is adenosine(37) in tRNA + dimethylallyl diphosphate = N(6)-dimethylallyladenosine(37) in tRNA + diphosphate. In terms of biological role, catalyzes the transfer of a dimethylallyl group onto the adenine at position 37 in tRNAs that read codons beginning with uridine, leading to the formation of N6-(dimethylallyl)adenosine (i(6)A). This Escherichia coli O6:K15:H31 (strain 536 / UPEC) protein is tRNA dimethylallyltransferase.